The following is a 130-amino-acid chain: Small ribosomal subunit protein uS9 (130 aa).

It belongs to the universal ribosomal protein uS9 family.

This Polaromonas naphthalenivorans (strain CJ2) protein is Small ribosomal subunit protein uS9.